A 257-amino-acid polypeptide reads, in one-letter code: MTKTLTKKISNKKHAAVVTYIMGGDGGLDNLEEQLLFLEKSGVSAIEIGIPFSDPVADGPIIQLAGLRALKKQVSLEAILNKLATSQVQIPLIIMSYINPIFHLGIPKFVEMVQKTPVKGLIIPDLPYEHQTLITPELEGTDIALIPLVSLTSPKERLKEIAKQAEGFIYAVTVNGTTGVRNKFDTHIDTHLAYLKSISPVPVLAGFGVSSIEHVEKFAHVCDGVIIGSKVVQMLHENKKAELGTFLQKAAEVRIEN.

Active-site proton acceptor residues include glutamate 47 and aspartate 58.

It belongs to the TrpA family. Tetramer of two alpha and two beta chains.

The catalysed reaction is (1S,2R)-1-C-(indol-3-yl)glycerol 3-phosphate + L-serine = D-glyceraldehyde 3-phosphate + L-tryptophan + H2O. It functions in the pathway amino-acid biosynthesis; L-tryptophan biosynthesis; L-tryptophan from chorismate: step 5/5. In terms of biological role, the alpha subunit is responsible for the aldol cleavage of indoleglycerol phosphate to indole and glyceraldehyde 3-phosphate. The sequence is that of Tryptophan synthase alpha chain from Listeria welshimeri serovar 6b (strain ATCC 35897 / DSM 20650 / CCUG 15529 / CIP 8149 / NCTC 11857 / SLCC 5334 / V8).